A 179-amino-acid polypeptide reads, in one-letter code: Ribulose bisphosphate carboxylase small subunit, chloroplastic 2 (179 aa).

A chloroplast-targeting transit peptide spans 1-58 (MASSATMLSSVATAACVAPAQASMVAPFVGLKSASAFPVTQKTVTGLSTLPSNGGRVQ).

Belongs to the RuBisCO small chain family. Heterohexadecamer of 8 large and 8 small subunits.

It is found in the plastid. It localises to the chloroplast. RuBisCO catalyzes two reactions: the carboxylation of D-ribulose 1,5-bisphosphate, the primary event in carbon dioxide fixation, as well as the oxidative fragmentation of the pentose substrate. Both reactions occur simultaneously and in competition at the same active site. Although the small subunit is not catalytic it is essential for maximal activity. The polypeptide is Ribulose bisphosphate carboxylase small subunit, chloroplastic 2 (Fritillaria agrestis (Stinkbells)).